Here is a 731-residue protein sequence, read N- to C-terminus: Polyadenylate-binding protein, cytoplasmic and nuclear (731 aa).

Residues 1–10 (MSADVSTTPA) are compositionally biased toward polar residues. Positions 1-51 (MSADVSTTPAAENVNGAAEASPAPAAAAPSATTPEVTAVENSTPAPAANQP) are disordered. A compositionally biased stretch (low complexity) spans 17-39 (AAEASPAPAAAAPSATTPEVTAV). RRM domains are found at residues 54–132 (ASLY…WSQR), 142–219 (GNVF…HHIS), 235–312 (TNVY…RAQK), and 338–472 (VNLY…LAQR). Disordered regions lie at residues 369 to 429 (VMRD…SDKK) and 603 to 665 (GGRG…NAQT). Over residues 616–627 (GMRGGPGYGQGR) the composition is skewed to gly residues. A compositionally biased stretch (low complexity) spans 645–656 (QNAAAPAGPQEG). Residues 658–731 (AGGVNAQTLG…MRPLAFTMST (74 aa)) form the PABC domain.

It belongs to the polyadenylate-binding protein type-1 family.

It is found in the cytoplasm. The protein resides in the nucleus. Functionally, binds the poly(A) tail of mRNA. Appears to be an important mediator of the multiple roles of the poly(A) tail in mRNA biogenesis, stability and translation. In the nucleus, involved in both mRNA cleavage and polyadenylation. Is also required for efficient mRNA export to the cytoplasm. Acts in concert with a poly(A)-specific nuclease (PAN) to affect poly(A) tail shortening, which may occur concomitantly with either nucleocytoplasmic mRNA transport or translational initiation. In the cytoplasm, stimulates translation initiation and regulates mRNA decay through translation termination-coupled poly(A) shortening, probably mediated by PAN. This is Polyadenylate-binding protein, cytoplasmic and nuclear (pab1) from Aspergillus niger (strain ATCC MYA-4892 / CBS 513.88 / FGSC A1513).